A 63-amino-acid chain; its full sequence is Cytochrome c oxidase subunit 7C, mitochondrial (63 aa).

Residues 1–16 (MLGQSIRRFTTSVVRR) constitute a mitochondrion transit peptide. Residues 17-33 (SHYEEGPGKNLPFSVEN) are Mitochondrial matrix-facing. N6-acetyllysine; alternate is present on Lys-25. The residue at position 25 (Lys-25) is an N6-succinyllysine; alternate. Residues 34-60 (KWRLLAMMTLYFGSGFAAPFFIVRHQL) traverse the membrane as a helical segment. Over 61-63 (LKK) the chain is Mitochondrial intermembrane.

The protein belongs to the cytochrome c oxidase VIIc family. Component of the cytochrome c oxidase (complex IV, CIV), a multisubunit enzyme composed of 14 subunits. The complex is composed of a catalytic core of 3 subunits MT-CO1, MT-CO2 and MT-CO3, encoded in the mitochondrial DNA, and 11 supernumerary subunits COX4I, COX5A, COX5B, COX6A, COX6B, COX6C, COX7A, COX7B, COX7C, COX8 and NDUFA4, which are encoded in the nuclear genome. The complex exists as a monomer or a dimer and forms supercomplexes (SCs) in the inner mitochondrial membrane with NADH-ubiquinone oxidoreductase (complex I, CI) and ubiquinol-cytochrome c oxidoreductase (cytochrome b-c1 complex, complex III, CIII), resulting in different assemblies (supercomplex SCI(1)III(2)IV(1) and megacomplex MCI(2)III(2)IV(2)). Interacts with RAB5IF.

The protein localises to the mitochondrion inner membrane. Its pathway is energy metabolism; oxidative phosphorylation. Component of the cytochrome c oxidase, the last enzyme in the mitochondrial electron transport chain which drives oxidative phosphorylation. The respiratory chain contains 3 multisubunit complexes succinate dehydrogenase (complex II, CII), ubiquinol-cytochrome c oxidoreductase (cytochrome b-c1 complex, complex III, CIII) and cytochrome c oxidase (complex IV, CIV), that cooperate to transfer electrons derived from NADH and succinate to molecular oxygen, creating an electrochemical gradient over the inner membrane that drives transmembrane transport and the ATP synthase. Cytochrome c oxidase is the component of the respiratory chain that catalyzes the reduction of oxygen to water. Electrons originating from reduced cytochrome c in the intermembrane space (IMS) are transferred via the dinuclear copper A center (CU(A)) of subunit 2 and heme A of subunit 1 to the active site in subunit 1, a binuclear center (BNC) formed by heme A3 and copper B (CU(B)). The BNC reduces molecular oxygen to 2 water molecules using 4 electrons from cytochrome c in the IMS and 4 protons from the mitochondrial matrix. This Sus scrofa (Pig) protein is Cytochrome c oxidase subunit 7C, mitochondrial (COX7C).